The sequence spans 204 residues: High frequency lysogenization protein HflD homolog (204 aa).

It belongs to the HflD family.

The protein localises to the cytoplasm. The protein resides in the cell inner membrane. This chain is High frequency lysogenization protein HflD homolog, found in Stenotrophomonas maltophilia (strain K279a).